The sequence spans 357 residues: Cytochrome c peroxidase, mitochondrial (357 aa).

The transit peptide at 1 to 23 directs the protein to the mitochondrion; the sequence is MSATALRIAPIASRTFQRRLGYL. Catalysis depends on His116, which acts as the Proton acceptor. The interval 189 to 212 is disordered; it reads PWRSGRTDLPEDMTPDNGRLPDGD. Heme b is bound at residue His239. Residue Trp255 is the Tryptophan radical intermediate of the active site.

This sequence belongs to the peroxidase family. Cytochrome c peroxidase subfamily. As to quaternary structure, forms a one-to-one complex with cytochrome c. Heme b serves as cofactor.

It is found in the mitochondrion matrix. The protein localises to the mitochondrion intermembrane space. The enzyme catalyses 2 Fe(II)-[cytochrome c] + H2O2 + 2 H(+) = 2 Fe(III)-[cytochrome c] + 2 H2O. In terms of biological role, destroys radicals which are normally produced within the cells and which are toxic to biological systems. The protein is Cytochrome c peroxidase, mitochondrial of Candida glabrata (strain ATCC 2001 / BCRC 20586 / JCM 3761 / NBRC 0622 / NRRL Y-65 / CBS 138) (Yeast).